The primary structure comprises 141 residues: ATP synthase epsilon chain (141 aa).

Belongs to the ATPase epsilon chain family. In terms of assembly, F-type ATPases have 2 components, CF(1) - the catalytic core - and CF(0) - the membrane proton channel. CF(1) has five subunits: alpha(3), beta(3), gamma(1), delta(1), epsilon(1). CF(0) has three main subunits: a, b and c.

It localises to the cell membrane. Functionally, produces ATP from ADP in the presence of a proton gradient across the membrane. This chain is ATP synthase epsilon chain, found in Lactococcus lactis subsp. lactis (strain IL1403) (Streptococcus lactis).